The following is a 454-amino-acid chain: Cell division cycle-associated 7-like protein (454 aa).

The Integrase domain-binding motif 1 (IBM1) signature appears at 9 to 33; the sequence is IPKEVADIFNAPSDDEEFVGFRDDV. The residue at position 21 (S21) is a Phosphoserine. The Integrase domain-binding motif 2 (IBM2) motif lies at 65–91; that stretch reads FTEELRRIFIEDTDSETEDFAGFTQSD. T77 carries the post-translational modification Phosphothreonine. A Phosphoserine modification is found at S79. A phosphothreonine mark is found at T81 and T88. Disordered regions lie at residues 103-169 and 188-213; these read VESD…LFSS and QVIQREDSTSESEDDSRDESQESSDA. Phosphoserine occurs at positions 105, 108, 117, 138, 139, 162, 195, and 197. Residues 117 to 126 are compositionally biased toward acidic residues; that stretch reads SEEEEDEEED. The MYC-binding stretch occupies residues 213–235; it reads ALLKRTMNIKENKAMLAQLLAEL. Glycyl lysine isopeptide (Lys-Gly) (interchain with G-Cter in SUMO2) cross-links involve residues K222 and K225. A Phosphoserine modification is found at S261.

In terms of assembly, interacts with MYC. Interacts (via IBM motifs) with PSIP1 (via IBD domain); phosphorylation increases its affinity for PSIP1. Post-translationally, phosphorylation increases its interaction with PSIP1. Ubiquitous. Overexpressed in medulloblastoma.

It localises to the cytoplasm. It is found in the nucleus. In terms of biological role, plays a role in transcriptional regulation as a repressor that inhibits monoamine oxidase A (MAOA) activity and gene expression by binding to the promoter. Plays an important oncogenic role in mediating the full transforming effect of MYC in medulloblastoma cells. Involved in apoptotic signaling pathways; May act downstream of P38-kinase and BCL-2, but upstream of CASP3/caspase-3 as well as CCND1/cyclin D1 and E2F1. In Homo sapiens (Human), this protein is Cell division cycle-associated 7-like protein (CDCA7L).